A 1579-amino-acid polypeptide reads, in one-letter code: tRNA (guanosine(18)-2'-O)-methyltransferase TARBP1 (1579 aa).

Methionine 1 bears the N-acetylmethionine mark. Valine 1501, glycine 1524, isoleucine 1544, glutamine 1546, and leucine 1553 together coordinate S-adenosyl-L-homocysteine.

The protein belongs to the class IV-like SAM-binding methyltransferase superfamily. RNA methyltransferase TrmH family. Monomer and homodimer.

The catalysed reaction is guanosine(18) in tRNA + S-adenosyl-L-methionine = 2'-O-methylguanosine(18) in tRNA + S-adenosyl-L-homocysteine + H(+). Its function is as follows. S-adenosyl-L-methionine-dependent 2'-O-ribose methyltransferase that catalyzes the formation of 2'-O-methylguanosine at position 18 (Gm18) in a subset of tRNA. Selectively mediates Gm18 methylation of tRNAGln-TTG/CTG and tRNASer-TGA/GCT. Gm18 modification can enhance the stability of modified tRNAs. This is tRNA (guanosine(18)-2'-O)-methyltransferase TARBP1 from Mus musculus (Mouse).